Consider the following 260-residue polypeptide: Hydroxyacylglutathione hydrolase (260 aa).

Positions 55, 57, 59, 60, 116, 133, and 171 each coordinate Zn(2+).

This sequence belongs to the metallo-beta-lactamase superfamily. Glyoxalase II family. As to quaternary structure, monomer. The cofactor is Zn(2+).

The enzyme catalyses an S-(2-hydroxyacyl)glutathione + H2O = a 2-hydroxy carboxylate + glutathione + H(+). Its pathway is secondary metabolite metabolism; methylglyoxal degradation; (R)-lactate from methylglyoxal: step 2/2. Functionally, thiolesterase that catalyzes the hydrolysis of S-D-lactoyl-glutathione to form glutathione and D-lactic acid. The chain is Hydroxyacylglutathione hydrolase from Shewanella loihica (strain ATCC BAA-1088 / PV-4).